The chain runs to 390 residues: Succinate--CoA ligase [ADP-forming] subunit beta (390 aa).

Positions lysine 9 to glutamate 244 constitute an ATP-grasp domain. ATP contacts are provided by residues lysine 46, glycine 53 to glycine 55, glutamate 99, leucine 102, and glutamate 107. Residues asparagine 199 and aspartate 213 each contribute to the Mg(2+) site. Substrate is bound by residues asparagine 264 and glycine 321–valine 323.

Belongs to the succinate/malate CoA ligase beta subunit family. In terms of assembly, heterotetramer of two alpha and two beta subunits. Requires Mg(2+) as cofactor.

It carries out the reaction succinate + ATP + CoA = succinyl-CoA + ADP + phosphate. It catalyses the reaction GTP + succinate + CoA = succinyl-CoA + GDP + phosphate. The protein operates within carbohydrate metabolism; tricarboxylic acid cycle; succinate from succinyl-CoA (ligase route): step 1/1. Succinyl-CoA synthetase functions in the citric acid cycle (TCA), coupling the hydrolysis of succinyl-CoA to the synthesis of either ATP or GTP and thus represents the only step of substrate-level phosphorylation in the TCA. The beta subunit provides nucleotide specificity of the enzyme and binds the substrate succinate, while the binding sites for coenzyme A and phosphate are found in the alpha subunit. The sequence is that of Succinate--CoA ligase [ADP-forming] subunit beta from Campylobacter curvus (strain 525.92).